Reading from the N-terminus, the 464-residue chain is NADH-quinone oxidoreductase subunit N (464 aa).

Transmembrane regions (helical) follow at residues 5–25 (MLLA…VLFL), 31–51 (LLSA…PASL), 63–83 (LFAR…CLLS), 96–116 (EYAA…ASTS), 117–137 (LVSL…LIAV), 152–172 (LLPG…VYAA), 188–208 (GAPM…AAAF), 242–262 (VFAV…RPLL), 286–303 (MLAY…LAVL), 312–332 (AGLF…GLLA), 358–378 (AVLL…AGFM), 393–415 (VGLV…RPVL), and 436–456 (LIFV…GPFF).

It belongs to the complex I subunit 2 family. As to quaternary structure, NDH-1 is composed of 14 different subunits. Subunits NuoA, H, J, K, L, M, N constitute the membrane sector of the complex.

It is found in the cell inner membrane. It catalyses the reaction a quinone + NADH + 5 H(+)(in) = a quinol + NAD(+) + 4 H(+)(out). Its function is as follows. NDH-1 shuttles electrons from NADH, via FMN and iron-sulfur (Fe-S) centers, to quinones in the respiratory chain. The immediate electron acceptor for the enzyme in this species is believed to be ubiquinone. Couples the redox reaction to proton translocation (for every two electrons transferred, four hydrogen ions are translocated across the cytoplasmic membrane), and thus conserves the redox energy in a proton gradient. This is NADH-quinone oxidoreductase subunit N from Syntrophotalea carbinolica (strain DSM 2380 / NBRC 103641 / GraBd1) (Pelobacter carbinolicus).